Reading from the N-terminus, the 461-residue chain is Anthranilate synthase component 1 (461 aa).

Residues Ser-43 and 238-240 (PYM) each bind L-tryptophan. 273–274 (GT) serves as a coordination point for chorismate. Glu-300 is a Mg(2+) binding site. Residues Tyr-388, Arg-408, 422–424 (GAG), and Gly-424 contribute to the chorismate site. Glu-437 lines the Mg(2+) pocket.

This sequence belongs to the anthranilate synthase component I family. Heterotetramer consisting of two non-identical subunits: a beta subunit (TrpG) and a large alpha subunit (TrpE). Mg(2+) is required as a cofactor.

The enzyme catalyses chorismate + L-glutamine = anthranilate + pyruvate + L-glutamate + H(+). The protein operates within amino-acid biosynthesis; L-tryptophan biosynthesis; L-tryptophan from chorismate: step 1/5. With respect to regulation, feedback inhibited by tryptophan. Its function is as follows. Part of a heterotetrameric complex that catalyzes the two-step biosynthesis of anthranilate, an intermediate in the biosynthesis of L-tryptophan. In the first step, the glutamine-binding beta subunit (TrpG) of anthranilate synthase (AS) provides the glutamine amidotransferase activity which generates ammonia as a substrate that, along with chorismate, is used in the second step, catalyzed by the large alpha subunit of AS (TrpE) to produce anthranilate. In the absence of TrpG, TrpE can synthesize anthranilate directly from chorismate and high concentrations of ammonia. The polypeptide is Anthranilate synthase component 1 (trpE) (Methanothermobacter marburgensis (strain ATCC BAA-927 / DSM 2133 / JCM 14651 / NBRC 100331 / OCM 82 / Marburg) (Methanobacterium thermoautotrophicum)).